We begin with the raw amino-acid sequence, 312 residues long: Elongation factor Ts (312 aa).

The interval 84 to 87 (TDFL) is involved in Mg(2+) ion dislocation from EF-Tu.

It belongs to the EF-Ts family.

Its subcellular location is the cytoplasm. Its function is as follows. Associates with the EF-Tu.GDP complex and induces the exchange of GDP to GTP. It remains bound to the aminoacyl-tRNA.EF-Tu.GTP complex up to the GTP hydrolysis stage on the ribosome. The sequence is that of Elongation factor Ts from Caulobacter sp. (strain K31).